The following is a 480-amino-acid chain: MSFSAFELGRFTGRPVRLFVFTRQHLTWRFANSDRDIVSGGFTYLAARIDRSDIQHTTEREKDQITITFPYLLNPAADPLPVTQALGNQWRPYHPVDVIRVVCMVMHVGDTDPPQVEWVGRVIQPRLSDTEMELTCAPHSSIALARNQGAKFQTSCWKTVYSTGLRGCNLSPGAHRVTGRVARLEQLPTDPPQGAHVLVPDMAAHLAPLAGQVATWTYEAQVPHSGTVASVLKFHVRLNNVTAIAVGTVLHWTAADGIAHHGTVTGLFGTVAVLNTTEGITAGSVCHWSVAEARQGTATILQAYHAYDWVSQAAGGSSSGFSWDDASGLHDAHSGTAWSVTYTRRSALVLSDVTGLEEGSSITVALSGSGVSGTLSAVAGLQLTAAHFASAAYSLEGGTLTYTDANGLLIRRSIASHTLGSTTLTLSAGGPNPVVNDAVTVLPTCPRTWDACAARGNTIHFGGAVYRPLHTPDGVSMSWG.

This is an uncharacterized protein from Xylella fastidiosa (strain 9a5c).